The following is a 490-amino-acid chain: ATP synthase subunit beta, chloroplastic (490 aa).

ATP is bound at residue 170–177 (GGAGVGKT).

This sequence belongs to the ATPase alpha/beta chains family. In terms of assembly, F-type ATPases have 2 components, CF(1) - the catalytic core - and CF(0) - the membrane proton channel. CF(1) has five subunits: alpha(3), beta(3), gamma(1), delta(1), epsilon(1). CF(0) has four main subunits: a(1), b(1), b'(1) and c(9-12).

It localises to the plastid. The protein localises to the chloroplast thylakoid membrane. It carries out the reaction ATP + H2O + 4 H(+)(in) = ADP + phosphate + 5 H(+)(out). In terms of biological role, produces ATP from ADP in the presence of a proton gradient across the membrane. The catalytic sites are hosted primarily by the beta subunits. The chain is ATP synthase subunit beta, chloroplastic from Ipomoea obscura (Obscure morning glory).